Here is a 1806-residue protein sequence, read N- to C-terminus: SH3 and multiple ankyrin repeat domains protein 3 (1806 aa).

The interval M76–Q150 is intramolecular interaction with the ANK repeats. Residue Y197 is modified to Phosphotyrosine. 6 ANK repeats span residues S223 to F253, D257 to Y286, R290 to I320, N324 to A353, S357 to V386, and N390 to P420. Residues A407–S416 show a composition bias toward basic and acidic residues. A disordered region spans residues A407–S467. The segment covering L439 to A461 has biased composition (pro residues). Phosphoserine occurs at positions 448, 450, 463, 470, and 558. Residues V546–M605 enclose the SH3 domain. Residue Y631 is modified to Phosphotyrosine. The region spanning V646–T740 is the PDZ domain. Disordered regions lie at residues K665 to D689 and P760 to P853. The segment at P753–P760 is required for interaction with ABI1. S770 carries the phosphoserine modification. Positions A813 to P845 are enriched in pro residues. 3 positions are modified to phosphoserine: S857, S866, and S877. The interval R871–K1021 is disordered. The span at D906–P915 shows a compositional bias: pro residues. 2 positions are modified to phosphoserine: S966 and S973. A Phosphothreonine modification is found at T988. Gly residues predominate over residues P993–S1013. Residue Y1006 is modified to Phosphotyrosine. R1041 carries the asymmetric dimethylarginine modification. The segment covering P1115–P1124 has biased composition (low complexity). Disordered regions lie at residues P1115 to L1460, A1475 to A1525, and S1546 to R1584. The span at T1173–A1193 shows a compositional bias: basic and acidic residues. A Phosphothreonine modification is found at T1204. S1208, S1233, S1237, and S1240 each carry phosphoserine. Positions E1251–K1261 are enriched in pro residues. T1309 bears the Phosphothreonine mark. S1328 bears the Phosphoserine mark. Over residues L1360–E1370 the composition is skewed to basic and acidic residues. 2 stretches are compositionally biased toward low complexity: residues E1371 to V1392 and H1444 to L1460. Residues P1485–P1491 carry the SH3-binding motif. At S1495 the chain carries Phosphoserine. Positions S1495–R1505 are enriched in polar residues. A coiled-coil region spans residues I1569–E1589. A phosphoserine mark is found at S1585, S1596, S1604, and S1614. Over residues P1627–S1637 the composition is skewed to low complexity. The interval P1627 to G1664 is disordered. The span at V1638–A1657 shows a compositional bias: pro residues. A phosphoserine mark is found at S1709, S1711, and S1713. The 64-residue stretch at W1743–S1806 folds into the SAM domain.

As to quaternary structure, may homomultimerize via its SAM domain. Interacts with BAIAP2, DBNL and SLC17A7/VGLUT1. Interacts with DLGAP1/GKAP, GRM1/MGLUR1, GRM5/MGLUR5 and LZTS3 C-termini via its PDZ domain. Interacts with ABI1, HOMER1, HOMER2, HOMER3 and CTTN/cortactin SH3 domain. Is part of a complex with DLG4/PSD-95 and DLGAP1/GKAP. Interacts (via PDZ domain) with the GRIA1 subunit of the AMPA receptor (via PDZ-binding motif). Interacts with WASF1 and CYFIP2; the interactions mediate the association of SHANK3 with the WAVE1 complex. Interacts with ARPC2; the interaction probably mediates the association of SHANK3 with the Arp2/3 complex. Interacts (via ANK repeats) with SHARPIN and SPTAN1. Interacts (via PDZ domain) with ARHGAP44 (probably via PDZ-binding motif); the interaction takes place in dendritic spines and promotes GRIA1 exocytosis. Interacts with CAMK2A. Interacts with DIP2A. Interacts with ADGRL3. In terms of tissue distribution, expressed in the cerebral cortex and the cerebellum.

The protein resides in the cytoplasm. The protein localises to the postsynaptic density. Its subcellular location is the cell projection. It localises to the dendritic spine. In terms of biological role, major scaffold postsynaptic density protein which interacts with multiple proteins and complexes to orchestrate the dendritic spine and synapse formation, maturation and maintenance. Interconnects receptors of the postsynaptic membrane including NMDA-type and metabotropic glutamate receptors via complexes with GKAP/PSD-95 and HOMER, respectively, and the actin-based cytoskeleton. Plays a role in the structural and functional organization of the dendritic spine and synaptic junction through the interaction with Arp2/3 and WAVE1 complex as well as the promotion of the F-actin clusters. By way of this control of actin dynamics, participates in the regulation of developing neurons growth cone motility and the NMDA receptor-signaling. Also modulates GRIA1 exocytosis and GRM5/MGLUR5 expression and signaling to control the AMPA and metabotropic glutamate receptor-mediated synaptic transmission and plasticity. May be required at an early stage of synapse formation and be inhibited by IGF1 to promote synapse maturation. This is SH3 and multiple ankyrin repeat domains protein 3 (SHANK3) from Homo sapiens (Human).